The primary structure comprises 206 residues: Protein GET1 (206 aa).

Over 1 to 4 (MPSL) the chain is Lumenal. Residues 5 to 24 (LITALFLNVIIYVINTVGAA) traverse the membrane as a helical segment. Over 25–110 (TVDGLLWLLY…TFDITIKIAR (86 aa)) the chain is Cytoplasmic. A coiled-coil region spans residues 75-100 (AKLRRRHDKALEAYEAKNNELTQSKS). A helical membrane pass occupies residues 111–131 (WAATSGLMLFLQFWYSKTPIF). Topologically, residues 132–155 (TLPPGWIPWQVQWVLSFPRAPMGT) are lumenal. The helical transmembrane segment at 156–172 (VSIQIWSGACATVVALV) threads the bilayer. Residues 173–206 (GDAMKASLAYVSKPKIDRIKLGATMEGKEGKKRQ) lie on the Cytoplasmic side of the membrane.

The protein belongs to the WRB/GET1 family. As to quaternary structure, interacts with GET3.

Its subcellular location is the endoplasmic reticulum membrane. Its function is as follows. Required for the post-translational delivery of tail-anchored (TA) proteins to the endoplasmic reticulum. Acts as a membrane receptor for soluble GET3, which recognizes and selectively binds the transmembrane domain of TA proteins in the cytosol. The chain is Protein GET1 from Ajellomyces capsulatus (strain H143) (Darling's disease fungus).